Consider the following 759-residue polypeptide: uncharacterized protein (759 aa).

3 stretches are compositionally biased toward low complexity: residues 1–36 (MSSNNNFDNNKNNNNNNNSNQNNNNIDNGGNNNETN), 142–211 (QQQN…NQHH), and 221–347 (NHSN…GSSS). Disordered regions lie at residues 1–47 (MSSN…AQTP), 142–380 (QQQN…PSIG), 409–428 (NNNCTESNDDDSPLNGGLGY), 463–504 (IING…NFEN), and 654–759 (LVDD…YLNK). Over residues 348–360 (PFQDQARSPSSSF) the composition is skewed to polar residues. 2 stretches are compositionally biased toward low complexity: residues 463–495 (IINGFNKNNNNNNNNNNNNNNSNNNNNNNGNNN) and 660–747 (HISN…DNNN).

This is an uncharacterized protein from Dictyostelium discoideum (Social amoeba).